Reading from the N-terminus, the 358-residue chain is Isopentenyl-diphosphate delta-isomerase (358 aa).

Residue 12-13 (RK) participates in substrate binding. Residues 69–71 (AMT), S99, and N128 each bind FMN. Q158 contacts substrate. E159 is a Mg(2+) binding site. FMN is bound by residues K190, T220, 267-269 (GIR), and 288-289 (AG).

It belongs to the IPP isomerase type 2 family. In terms of assembly, homooctamer. Dimer of tetramers. FMN serves as cofactor. It depends on NADPH as a cofactor. Mg(2+) is required as a cofactor.

It is found in the cytoplasm. The enzyme catalyses isopentenyl diphosphate = dimethylallyl diphosphate. Functionally, involved in the biosynthesis of isoprenoids. Catalyzes the 1,3-allylic rearrangement of the homoallylic substrate isopentenyl (IPP) to its allylic isomer, dimethylallyl diphosphate (DMAPP). This Listeria monocytogenes serotype 4b (strain F2365) protein is Isopentenyl-diphosphate delta-isomerase.